Reading from the N-terminus, the 299-residue chain is tRNA dimethylallyltransferase (299 aa).

ATP is bound at residue 10–17; that stretch reads GATATGKS. 12–17 lines the substrate pocket; it reads TATGKS. Residues 35–38 are interaction with substrate tRNA; it reads DSRQ.

It belongs to the IPP transferase family. As to quaternary structure, monomer. Requires Mg(2+) as cofactor.

It carries out the reaction adenosine(37) in tRNA + dimethylallyl diphosphate = N(6)-dimethylallyladenosine(37) in tRNA + diphosphate. In terms of biological role, catalyzes the transfer of a dimethylallyl group onto the adenine at position 37 in tRNAs that read codons beginning with uridine, leading to the formation of N6-(dimethylallyl)adenosine (i(6)A). The protein is tRNA dimethylallyltransferase of Rippkaea orientalis (strain PCC 8801 / RF-1) (Cyanothece sp. (strain PCC 8801)).